Reading from the N-terminus, the 148-residue chain is Ribonuclease H (148 aa).

The RNase H type-1 domain maps to 1 to 142; sequence MSDSVELYTD…ADQLANRGVD (142 aa). Mg(2+)-binding residues include aspartate 10, glutamate 48, aspartate 70, and aspartate 134. The tract at residues 129-148 is disordered; the sequence is GNERADQLANRGVDEVRAKR.

The protein belongs to the RNase H family. Monomer. Mg(2+) serves as cofactor.

The protein localises to the cytoplasm. It carries out the reaction Endonucleolytic cleavage to 5'-phosphomonoester.. Its function is as follows. Endonuclease that specifically degrades the RNA of RNA-DNA hybrids. The chain is Ribonuclease H from Pseudomonas putida (strain W619).